A 512-amino-acid chain; its full sequence is Amidase 2 (512 aa).

Catalysis depends on charge relay system residues Lys-122 and Ser-197. Residues Ser-197 and Ile-218–Ser-221 each bind substrate. Ser-221 functions as the Acyl-ester intermediate in the catalytic mechanism.

It belongs to the amidase family.

It carries out the reaction a monocarboxylic acid amide + H2O = a monocarboxylate + NH4(+). The protein operates within xenobiotic degradation. In terms of biological role, amidase; part of the Fusarium detoxification of benzoxazolinone cluster 2 (FDB2) involved in the degradation of benzoxazolinones produced by the host plant. Maize, wheat, and rye produce the 2 benzoxazinone phytoanticipins 2,4-dihy-droxy-7-methoxy-1,4-benzoxazin-3-one (DIMBOA) and 2,4-dihydroxy-1,4-benzoxazin-3-one (DIBOA) that, due to their inherent instability once released, spontaneously degrade to the more stable corresponding benzoxazolinones, 6-methoxy-2-benzoxazolinone (MBOA) and 2-benzoxazolinone (BOA), respectively. The first step in the detoxification of benzoxazolinones involves the hydrolysis of the cyclic ester bond of benzoxazolinones by the FDB1 cluster gamma-lactamase MBL1 to aminophenols. MBL1 is able to convert BOA into 2-aminophenol (2-AP), as well as MBOA into 5-methoxy-2-aminophenol (2-AMP). The FDB2 cluster N-malonyltransferase FDB2/NAT1 then metabolizes aminophenols via N-malonylation to non-toxic malonamic acids. FDB2/NAT1 converts 2-AP into N-(2-hydroxyphenyl) malonamic acid (HPMA) and 2-AMP into N-(2-hydroxy-4-methoxyphenyl) malonamic acid (HMPMA). The duplicated dienlactone hydrolases DLH1 and DLH2 may provide redundant function for hydrolyzing the lactone moiety in the BOA molecule. The roles of the amidases an other enzymes encoded by the 2 FDB clusters have not been identified so far. The chain is Amidase 2 from Gibberella moniliformis (strain M3125 / FGSC 7600) (Maize ear and stalk rot fungus).